The sequence spans 643 residues: 1-deoxy-D-xylulose-5-phosphate synthase (643 aa).

Thiamine diphosphate-binding positions include His-78 and 119–121; that span reads AHS. Asp-150 provides a ligand contact to Mg(2+). Residues 151–152, Asn-179, Tyr-288, and Glu-370 contribute to the thiamine diphosphate site; that span reads GS. Asn-179 provides a ligand contact to Mg(2+).

The protein belongs to the transketolase family. DXPS subfamily. Homodimer. Mg(2+) serves as cofactor. It depends on thiamine diphosphate as a cofactor.

The catalysed reaction is D-glyceraldehyde 3-phosphate + pyruvate + H(+) = 1-deoxy-D-xylulose 5-phosphate + CO2. It participates in metabolic intermediate biosynthesis; 1-deoxy-D-xylulose 5-phosphate biosynthesis; 1-deoxy-D-xylulose 5-phosphate from D-glyceraldehyde 3-phosphate and pyruvate: step 1/1. Functionally, catalyzes the acyloin condensation reaction between C atoms 2 and 3 of pyruvate and glyceraldehyde 3-phosphate to yield 1-deoxy-D-xylulose-5-phosphate (DXP). In Brucella abortus (strain S19), this protein is 1-deoxy-D-xylulose-5-phosphate synthase.